Reading from the N-terminus, the 2340-residue chain is MASASGGDVPAGREKDSKYRAFAKAVDQALKTFETPNEWADLISALGKLAKVFQSNAKYCAIPNRVTVAKRLSQCLHPALPMGVHLKALETYKIIFEILGPSKLPECLYLFAVGLFPLMDHCGIKVKSELFAIFENYLVPLGANLRPALPGFLGGVLLALEEGTEFYERSFILLDRVCEKVGPRAFYACLWQAILGSPPVRLPAMIYVNAKFDKLKSLDDQIHLVGDHVNHMVAALCAVADDTGSPLVQRYLLDFLCAAFPLDSTNLTDEDFVQLLRRCLFVVLRRDMSLNRRLYTWLINRSGETRGVSGLGGPDDGLELSFFKEKVLGLVHGALEQYLALDIIETPFANPQQSIWGDRKEAEQVQFAEVRVCRLLLYLQDRADIGRTILETVFSDFLKKSAEFHQGSNIKLIKKRPDSKPPRKPGDREGLHLDLNSLHSGVSGNSEDVTAPEGEPSIQSRRVDELSKTFNMLLNSLEPGFLWNFLGTWYQRIVEEGSEGKKSIHDFSQVVSICLEMSNVESDPAIRTQHLPRLLETILEGLSNKSLISECDQQDLLKLYTVCQKLLEISTAHPQSPIEVDEIAEDSLSLSQEVTAIEHERSQTDACLTQCVSALSTIFEIYTTRRDPSLIPLIDASTALLNAFLEVPIYYLGFDVVDNPEDVPSEVQQWLKNMLKVIDGPGWLKEMRNGHCSDVSARASLLELLCKIYVKSVSVLQQHEEAAHRPQDDFYDEMTHVLLKPLLGRRDIQFIEQGKVFGTCGEAVWLGIASRKFCCEQQRLARLLVELHSRRPQEASSDVESIVVQALTSTDDLVCTKAARTFHRVWVLTRNLEEAGGIYRKPFNRAVMILLGVLADESVSKTRTELKAAASAWFQDCSKHQDLPKIVQMLSTMLMNPVTARISIQYIRQDSKLTNEDCSAIPSDVAAVTLMTIDGKQRLYHVTGSGADSDASYLTEVRNRLLRASAGEETSEALQAHIIPSTEVLPAFDDDTDSLDTLSMGNESPEDVVKDILAILVDEVCQEYEERERLHDLLNLSNLEASGARFNLNEHEEQEESPEDRPAPIAAVQRVKKGHRRQDSLQESIFNMTEKDLCAFDTSEIFRPSTESLRGTATTSSTRETILPTGTVVGTVSSASSTGGSTSGSSLFEEMHTHMLLYGESGKVVDLARAETAFRILTALLAPRGATGNRMLLNCLVSSGTTTSSGTSSEGGSAEQSLVELMQRHVRAILGQHFWSAPASDEEKHKHFTLLELLITISLHFLRSYFLNSPISPVTEADLASLWKCKISALEFLCELFRELSAMLNEHESKQFVQFVQTILNRSKLQKCLLHLLLTAVDHNPMENGKLGGPLSVSISKFNEGLVGESRRLLPLLAAYHRSLLTFTSHAIRLECDIKRGFSTFSDAQSTHRYSIIQSVINQSFNNRTSSRDGHASTVELRAFLLILLNALKKQPHRHEMWLQFVVQILPWVERSLATIVCRVVEQLCKNMENAMSVAYENPPTSDVVVDSPGETRDEPDSYPANYLAMTLESLTTLVHFCVIDSAPTTTTTSGGVMTSSGAAQINDGTTPSSTSMVGHAMSVIPGSKVATELFSQLGKVFSMSGDSGGVLSSKMESSRQHGNGWRQAQSDMLTSLPHSLATVCNVWTVVRRAQNPLVPIGTNNQLRRLVLHLLSPIAQHHKHAFLTSLALVWLTRSTAKPTVTLRKQDPDRATFEYSSAQLDITNLLLSLQVIPFEDLISSVNSTLREASFKANKVGITTIDKTNFPTEEPLLELVHSCVSAVLQTQLRLCWSSLLSLFSEAPLSALSARAVFLLFVILSDFVKCVGGAYIVEDKAMYRNVQEVCSRLAEAVNAIVGWQLETTTWLKRTLVVKQDHGTSSINSNSIRSVEQSPIIEMQSSISNLSSEASQSTRNSTLSLINKPGGSITSGSTSTTTEKAEKKSSSNLRASIKDTNNNRRDPAHSTQALFLLAERLTDLLDSVSKSDEKDKVLPTLQAVWANVVPYLKAKNARNARFFLASSQLLASMSSYSYMRPVWKKTTLDLLLDSGFFKMDHAALKQWLVVTDHLMTHDRTSFKDLLKSISYSPNASFSIMTSKEQEYEARAQALKRLTFVVFGSQLDQYNGQMNDIQERLSDNLRVSQSPVIRSSFFLCVRVLLLRLRPHSLIGVWPIMVTELVHALSQLEQQLQNNGEQEGSSTSDQWMQLYVAACKLLETLCTLPAGYLSHFQMFHWAFVSSVSADKTEIFKPFAERINDLLAKKYGEFDAMSNHTASLAAVKILTSFEELRPFFYTLANLNKSVPESNNTPLRDAHALSGSLTYKNAVARLESALYVDFSEHLQF.

2 disordered regions span residues 411-458 and 1910-1959; these read KLIK…EPSI and TRNS…RRDP. Basic and acidic residues predominate over residues 415–432; the sequence is KRPDSKPPRKPGDREGLH. Positions 437–448 are enriched in polar residues; the sequence is SLHSGVSGNSED. Over residues 1922 to 1934 the composition is skewed to low complexity; it reads GGSITSGSTSTTT.

It belongs to the DOP1 family.

In terms of biological role, essential for cell patterning during gastrulation. May be involved in protein traffic between late Golgi and early endosomes. The sequence is that of Protein pad-1 (pad-1) from Caenorhabditis briggsae.